The primary structure comprises 383 residues: Pheromone-regulated membrane protein 10 (383 aa).

Over 1 to 65 the chain is Cytoplasmic; the sequence is MIVSFGDATT…ILADTNLYPP (65 aa). A helical transmembrane segment spans residues 66 to 86; the sequence is WMCVLLYAFCSAMVTPYAFGG. A topological domain (extracellular) is located at residue aspartate 87. The helical transmembrane segment at 88-108 threads the bilayer; that stretch reads WVNLAISFFMGLCVGSLQFIL. Residues 109-117 are Cytoplasmic-facing; it reads SQKSYMYSN. The chain crosses the membrane as a helical span at residues 118–138; sequence VFEISASIVVSFCGRAFGSIP. Residues 139-141 are Extracellular-facing; that stretch reads RSH. A helical membrane pass occupies residues 142–162; sequence ICFGAVTQGSLALILPGYIIL. Residues 163–180 lie on the Cytoplasmic side of the membrane; sequence CGALELQSRSLVAGAVRM. The chain crosses the membrane as a helical span at residues 181–201; it reads FYAIIYSLFLGFGITLGSALF. The Extracellular portion of the chain corresponds to 202 to 216; the sequence is GWMYHNATNEISCPQ. Residues 217–237 traverse the membrane as a helical segment; sequence LISPWFRFLFVPAFTISISLL. Residues 238-241 are Cytoplasmic-facing; the sequence is NQAH. The helical transmembrane segment at 242–262 threads the bilayer; that stretch reads ISQLPVMVFISCTGYVVTYWA. Residues 263–271 lie on the Extracellular side of the membrane; the sequence is GKHFANSTE. The chain crosses the membrane as a helical span at residues 272–292; the sequence is FTAALAAFVIGVLGNLYSRIW. Lysine 293 is a topological domain (cytoplasmic). A helical transmembrane segment spans residues 294-314; that stretch reads GLAVSAMLPAIFVQVPSGIAS. At 315 to 352 the chain is on the extracellular side; sequence QNSLLSGLQSANTIVNANETITTSTSDPSSSMSFGMTM. The helical transmembrane segment at 353-373 threads the bilayer; that stretch reads IQVCVGISVGLFASSLFVYPF. Residues 374 to 383 lie on the Cytoplasmic side of the membrane; sequence GKKKTGLFSL.

This sequence belongs to the ThrE exporter (TC 2.A.79) family.

The protein resides in the membrane. This chain is Pheromone-regulated membrane protein 10 (PRM10), found in Saccharomyces cerevisiae (strain ATCC 204508 / S288c) (Baker's yeast).